Reading from the N-terminus, the 537-residue chain is Glucose-6-phosphate isomerase (537 aa).

Glutamate 355 (proton donor) is an active-site residue. Active-site residues include histidine 386 and lysine 501.

The protein belongs to the GPI family.

The protein resides in the cytoplasm. It catalyses the reaction alpha-D-glucose 6-phosphate = beta-D-fructose 6-phosphate. It functions in the pathway carbohydrate biosynthesis; gluconeogenesis. It participates in carbohydrate degradation; glycolysis; D-glyceraldehyde 3-phosphate and glycerone phosphate from D-glucose: step 2/4. In terms of biological role, catalyzes the reversible isomerization of glucose-6-phosphate to fructose-6-phosphate. The chain is Glucose-6-phosphate isomerase from Protochlamydia amoebophila (strain UWE25).